The chain runs to 183 residues: NAD(P)H-quinone oxidoreductase subunit I, chloroplastic (183 aa).

4Fe-4S ferredoxin-type domains are found at residues 55–84 (GRIH…VDWE) and 95–124 (KNYS…MTEE). Residues Cys64, Cys67, Cys70, Cys74, Cys104, Cys107, Cys110, and Cys114 each contribute to the [4Fe-4S] cluster site.

It belongs to the complex I 23 kDa subunit family. In terms of assembly, NDH is composed of at least 16 different subunits, 5 of which are encoded in the nucleus. [4Fe-4S] cluster is required as a cofactor.

The protein localises to the plastid. Its subcellular location is the chloroplast thylakoid membrane. The enzyme catalyses a plastoquinone + NADH + (n+1) H(+)(in) = a plastoquinol + NAD(+) + n H(+)(out). The catalysed reaction is a plastoquinone + NADPH + (n+1) H(+)(in) = a plastoquinol + NADP(+) + n H(+)(out). Its function is as follows. NDH shuttles electrons from NAD(P)H:plastoquinone, via FMN and iron-sulfur (Fe-S) centers, to quinones in the photosynthetic chain and possibly in a chloroplast respiratory chain. The immediate electron acceptor for the enzyme in this species is believed to be plastoquinone. Couples the redox reaction to proton translocation, and thus conserves the redox energy in a proton gradient. In Marchantia polymorpha (Common liverwort), this protein is NAD(P)H-quinone oxidoreductase subunit I, chloroplastic.